We begin with the raw amino-acid sequence, 493 residues long: Ribose import ATP-binding protein RbsA (493 aa).

ABC transporter domains follow at residues 3-239 and 252-493; these read IKMK…VGRE and GRVV…TGGR. 35-42 lines the ATP pocket; sequence GENGAGKS.

Belongs to the ABC transporter superfamily. Ribose importer (TC 3.A.1.2.1) family. As to quaternary structure, the complex is composed of an ATP-binding protein (RbsA), two transmembrane proteins (RbsC) and a solute-binding protein (RbsB).

It is found in the cell membrane. It catalyses the reaction D-ribose(out) + ATP + H2O = D-ribose(in) + ADP + phosphate + H(+). Functionally, part of the ABC transporter complex RbsABC involved in ribose import. Responsible for energy coupling to the transport system. This chain is Ribose import ATP-binding protein RbsA, found in Bacillus licheniformis (strain ATCC 14580 / DSM 13 / JCM 2505 / CCUG 7422 / NBRC 12200 / NCIMB 9375 / NCTC 10341 / NRRL NRS-1264 / Gibson 46).